The sequence spans 430 residues: Glutamate-1-semialdehyde 2,1-aminomutase (430 aa).

Lys-267 bears the N6-(pyridoxal phosphate)lysine mark.

Belongs to the class-III pyridoxal-phosphate-dependent aminotransferase family. HemL subfamily. In terms of assembly, homodimer. Requires pyridoxal 5'-phosphate as cofactor.

The protein localises to the cytoplasm. It catalyses the reaction (S)-4-amino-5-oxopentanoate = 5-aminolevulinate. Its pathway is porphyrin-containing compound metabolism; protoporphyrin-IX biosynthesis; 5-aminolevulinate from L-glutamyl-tRNA(Glu): step 2/2. This is Glutamate-1-semialdehyde 2,1-aminomutase from Lawsonia intracellularis (strain PHE/MN1-00).